The following is a 211-amino-acid chain: Thymidylate kinase (211 aa).

11–18 (GPDGAGKT) serves as a coordination point for ATP.

This sequence belongs to the thymidylate kinase family.

The catalysed reaction is dTMP + ATP = dTDP + ADP. Its function is as follows. Phosphorylation of dTMP to form dTDP in both de novo and salvage pathways of dTTP synthesis. In Streptococcus pyogenes serotype M6 (strain ATCC BAA-946 / MGAS10394), this protein is Thymidylate kinase.